A 676-amino-acid polypeptide reads, in one-letter code: Putative Xaa-Pro dipeptidyl-peptidase (676 aa).

Residues Ser224, Asp330, and His361 each act as charge relay system in the active site. Positions 423–450 (RPGTGTQAGVGTLGLRTGSGTETFTDDP) are disordered.

It belongs to the peptidase S15 family.

It catalyses the reaction Hydrolyzes Xaa-Pro-|- bonds to release unblocked, N-terminal dipeptides from substrates including Ala-Pro-|-p-nitroanilide and (sequentially) Tyr-Pro-|-Phe-Pro-|-Gly-Pro-|-Ile.. In Streptomyces avermitilis (strain ATCC 31267 / DSM 46492 / JCM 5070 / NBRC 14893 / NCIMB 12804 / NRRL 8165 / MA-4680), this protein is Putative Xaa-Pro dipeptidyl-peptidase.